The chain runs to 126 residues: Chemocyanin (126 aa).

The signal sequence occupies residues 1–30 (MAQGSGSAERALVLGVVLVFLVFNCEVAES). Positions 31–126 (VVYTVGDGGG…GGLKIAVTAA (96 aa)) constitute a Phytocyanin domain. 3 residues coordinate Cu cation: H69, C109, and H114. C82 and C115 form a disulfide bridge.

In terms of tissue distribution, strongly expressed in stigma and style and to a lesser extent in leaves, ovary and petals. Not detected in pollen tubes, mature anthers or roots.

Its function is as follows. Diffusible chemotropic factor that induces pollen tube chemotropism. In Lilium longiflorum (Trumpet lily), this protein is Chemocyanin.